Here is a 577-residue protein sequence, read N- to C-terminus: Arginine--tRNA ligase (577 aa).

The 'HIGH' region motif lies at 122 to 132 (PNVAKEMHVGH).

The protein belongs to the class-I aminoacyl-tRNA synthetase family. As to quaternary structure, monomer.

It localises to the cytoplasm. The enzyme catalyses tRNA(Arg) + L-arginine + ATP = L-arginyl-tRNA(Arg) + AMP + diphosphate. In Salmonella enteritidis PT4 (strain P125109), this protein is Arginine--tRNA ligase.